The primary structure comprises 198 residues: FMN-dependent NADH:quinone oxidoreductase (198 aa).

FMN contacts are provided by residues serine 10, 16–18 (SQS), 94–97 (MYNF), and 138–141 (TRGG).

The protein belongs to the azoreductase type 1 family. Homodimer. FMN is required as a cofactor.

The catalysed reaction is 2 a quinone + NADH + H(+) = 2 a 1,4-benzosemiquinone + NAD(+). It catalyses the reaction N,N-dimethyl-1,4-phenylenediamine + anthranilate + 2 NAD(+) = 2-(4-dimethylaminophenyl)diazenylbenzoate + 2 NADH + 2 H(+). Functionally, quinone reductase that provides resistance to thiol-specific stress caused by electrophilic quinones. Also exhibits azoreductase activity. Catalyzes the reductive cleavage of the azo bond in aromatic azo compounds to the corresponding amines. In Shewanella baltica (strain OS223), this protein is FMN-dependent NADH:quinone oxidoreductase.